The sequence spans 298 residues: Ribosomal protein L11 methyltransferase (298 aa).

S-adenosyl-L-methionine-binding residues include threonine 148, glycine 169, aspartate 191, and asparagine 233.

It belongs to the methyltransferase superfamily. PrmA family.

It is found in the cytoplasm. It catalyses the reaction L-lysyl-[protein] + 3 S-adenosyl-L-methionine = N(6),N(6),N(6)-trimethyl-L-lysyl-[protein] + 3 S-adenosyl-L-homocysteine + 3 H(+). Methylates ribosomal protein L11. The chain is Ribosomal protein L11 methyltransferase from Marinobacter nauticus (strain ATCC 700491 / DSM 11845 / VT8) (Marinobacter aquaeolei).